Here is a 901-residue protein sequence, read N- to C-terminus: Dipeptidyl-aminopeptidase B (901 aa).

Positions 1–22 are enriched in low complexity; the sequence is MSSPRPSTSSTSSDSGLSVDTT. The disordered stretch occupies residues 1 to 67; it reads MSSPRPSTSS…EPFLPSAKKQ (67 aa). The Cytoplasmic segment spans residues 1 to 76; that stretch reads MSSPRPSTSS…QAASGSRTSR (76 aa). Residues 77-97 form a helical; Signal-anchor for type II membrane protein membrane-spanning segment; that stretch reads LIWGLVILCVAGWLWGLVLFV. Residues 98-901 lie on the Vacuolar side of the membrane; that stretch reads TQNRSAQQSV…VKRSLPMLVN (804 aa). Asn-334 and Asn-625 each carry an N-linked (GlcNAc...) asparagine glycan. Residue Ser-739 is the Charge relay system of the active site. An N-linked (GlcNAc...) asparagine glycan is attached at Asn-793. Active-site charge relay system residues include Asp-816 and His-849.

Belongs to the peptidase S9B family.

The protein localises to the vacuole membrane. It carries out the reaction Release of an N-terminal dipeptide, Xaa-Yaa-|-Zaa-, from a polypeptide, preferentially when Yaa is Pro, provided Zaa is neither Pro nor hydroxyproline.. Type IV dipeptidyl-peptidase which removes N-terminal dipeptides sequentially from polypeptides having unsubstituted N-termini provided that the penultimate residue is proline. The protein is Dipeptidyl-aminopeptidase B (dapB) of Aspergillus niger.